A 113-amino-acid polypeptide reads, in one-letter code: uncharacterized protein (113 aa).

A disordered region spans residues 28 to 55; sequence CDGGPRRPLSRRGEEARRARAPSYEEQE.

This is an uncharacterized protein from Human cytomegalovirus (strain AD169) (HHV-5).